The sequence spans 429 residues: Probable M18 family aminopeptidase 2 (429 aa).

Zn(2+) is bound by residues H82, H156, and H401.

Belongs to the peptidase M18 family. Zn(2+) is required as a cofactor.

This is Probable M18 family aminopeptidase 2 from Pseudomonas putida (strain ATCC 47054 / DSM 6125 / CFBP 8728 / NCIMB 11950 / KT2440).